The sequence spans 216 residues: N-acetyltransferase 9-like protein (216 aa).

Residues 68–215 (VLLNENDEAK…DHVELELMRT (148 aa)) enclose the N-acetyltransferase domain.

It belongs to the acetyltransferase family. GNAT subfamily.

Its subcellular location is the cytoplasm. The protein resides in the nucleus. This Schizosaccharomyces pombe (strain 972 / ATCC 24843) (Fission yeast) protein is N-acetyltransferase 9-like protein.